Reading from the N-terminus, the 251-residue chain is tRNA (guanine-N(1)-)-methyltransferase (251 aa).

S-adenosyl-L-methionine is bound by residues glycine 122 and 142 to 147; that span reads IGDYVL. The segment at 226-251 is disordered; sequence RARRPDLFATRPQPNRQKPPKNTTDG. Residues 237-251 are compositionally biased toward polar residues; that stretch reads PQPNRQKPPKNTTDG.

The protein belongs to the RNA methyltransferase TrmD family. Homodimer.

The protein localises to the cytoplasm. The enzyme catalyses guanosine(37) in tRNA + S-adenosyl-L-methionine = N(1)-methylguanosine(37) in tRNA + S-adenosyl-L-homocysteine + H(+). Its function is as follows. Specifically methylates guanosine-37 in various tRNAs. The sequence is that of tRNA (guanine-N(1)-)-methyltransferase from Rhodopseudomonas palustris (strain BisB18).